The following is a 244-amino-acid chain: MDKTTHFGFKTVNEDDKAGRVAEVFHSVAKKYDVMNDLMSGGLHRIWKHFTLSTAGVRPGMKVLDIAGGTGDLARGWKKRVGKTGEVWLTDINSSMLTVGRDRLLDEGMILPVAIADAEKLPFPDSHFDLVSVAFGLRNMTHKDQALKEMCRVLKPGGKLLVLEFSKVWTPLKPVYDLYSFKALPLMGKLVARDADSYQYLAESIRMHPDQDTLKDMMLEAGFGKVDYHNLSAGVVALHKGYKL.

S-adenosyl-L-methionine-binding positions include Thr-70, Asp-91, and 117 to 118 (DA).

The protein belongs to the class I-like SAM-binding methyltransferase superfamily. MenG/UbiE family.

The catalysed reaction is a 2-demethylmenaquinol + S-adenosyl-L-methionine = a menaquinol + S-adenosyl-L-homocysteine + H(+). It carries out the reaction a 2-methoxy-6-(all-trans-polyprenyl)benzene-1,4-diol + S-adenosyl-L-methionine = a 5-methoxy-2-methyl-3-(all-trans-polyprenyl)benzene-1,4-diol + S-adenosyl-L-homocysteine + H(+). Its pathway is quinol/quinone metabolism; menaquinone biosynthesis; menaquinol from 1,4-dihydroxy-2-naphthoate: step 2/2. It participates in cofactor biosynthesis; ubiquinone biosynthesis. Functionally, methyltransferase required for the conversion of demethylmenaquinol (DMKH2) to menaquinol (MKH2) and the conversion of 2-polyprenyl-6-methoxy-1,4-benzoquinol (DDMQH2) to 2-polyprenyl-3-methyl-6-methoxy-1,4-benzoquinol (DMQH2). This Laribacter hongkongensis (strain HLHK9) protein is Ubiquinone/menaquinone biosynthesis C-methyltransferase UbiE.